Here is a 424-residue protein sequence, read N- to C-terminus: Hemagglutinin-esterase (424 aa).

The signal sequence occupies residues 1-16 (MFLLPRFVLVSCIIGS). Positions 7–127 (FVLVSCIIGS…SNDIWMQNKG (121 aa)) are esterase domain 1. Topologically, residues 17-392 (LGFDNPPTNV…PICVYDPLPI (376 aa)) are virion surface. Residue S40 is the Nucleophile of the active site. C44 and C65 are disulfide-bonded. N-linked (GlcNAc...) asparagine; by host glycosylation is found at N54, N89, N153, N236, and N301. 3 disulfide bridges follow: C113–C162, C197–C276, and C205–C249. The receptor binding stretch occupies residues 128-266 (LFYTQVYKNM…GNYLAISNEL (139 aa)). The esterase domain 2 stretch occupies residues 267–379 (LLTVPTKAIC…RCPTAADINT (113 aa)). C307 and C312 are joined by a disulfide. N316 is a glycosylation site (N-linked (GlcNAc...) asparagine; by host). Active-site charge relay system residues include D326 and H329. The cysteines at positions 347 and 371 are disulfide-linked. N358 carries N-linked (GlcNAc...) asparagine; by host glycosylation. Residues 393–413 (ILLGILLGVAVIIIVVLLLYF) form a helical membrane-spanning segment. Residues 414 to 424 (MVDNGTRLHDA) lie on the Intravirion side of the membrane. N-linked (GlcNAc...) asparagine; by host glycosylation is present at N417.

Belongs to the influenza type C/coronaviruses hemagglutinin-esterase family. As to quaternary structure, homodimer; disulfide-linked. Forms a complex with the M protein in the pre-Golgi. Associates then with S-M complex to form a ternary complex S-M-HE. Post-translationally, N-glycosylated in the RER. In terms of processing, N-glycosylated in the host RER.

It localises to the virion membrane. Its subcellular location is the host cell membrane. It carries out the reaction N-acetyl-9-O-acetylneuraminate + H2O = N-acetylneuraminate + acetate + H(+). The enzyme catalyses N-acetyl-4-O-acetylneuraminate + H2O = N-acetylneuraminate + acetate + H(+). Its function is as follows. Structural protein that makes short spikes at the surface of the virus. Contains receptor binding and receptor-destroying activities. Mediates de-O-acetylation of N-acetyl-4-O-acetylneuraminic acid, which is probably the receptor determinant recognized by the virus on the surface of erythrocytes and susceptible cells. This receptor-destroying activity is important for virus release as it probably helps preventing self-aggregation and ensures the efficient spread of the progeny virus from cell to cell. May serve as a secondary viral attachment protein for initiating infection, the spike protein being the major one. May become a target for both the humoral and the cellular branches of the immune system. This chain is Hemagglutinin-esterase, found in Bovine coronavirus (strain 98TXSF-110-ENT) (BCoV-ENT).